The chain runs to 585 residues: Arginine--tRNA ligase (585 aa).

A 'HIGH' region motif is present at residues 131–141 (ANPTGPMHVGH).

It belongs to the class-I aminoacyl-tRNA synthetase family. Monomer.

The protein resides in the cytoplasm. The catalysed reaction is tRNA(Arg) + L-arginine + ATP = L-arginyl-tRNA(Arg) + AMP + diphosphate. The polypeptide is Arginine--tRNA ligase (Brucella abortus (strain S19)).